A 291-amino-acid chain; its full sequence is Elongation factor Ts (291 aa).

The segment at 84 to 87 (TDFV) is involved in Mg(2+) ion dislocation from EF-Tu.

Belongs to the EF-Ts family.

The protein resides in the cytoplasm. Associates with the EF-Tu.GDP complex and induces the exchange of GDP to GTP. It remains bound to the aminoacyl-tRNA.EF-Tu.GTP complex up to the GTP hydrolysis stage on the ribosome. In Bifidobacterium adolescentis (strain ATCC 15703 / DSM 20083 / NCTC 11814 / E194a), this protein is Elongation factor Ts.